We begin with the raw amino-acid sequence, 518 residues long: Pumilio homolog 14 (518 aa).

Disordered stretches follow at residues 26–46 (TMASSSSQPQPISSPFHQPEN) and 77–114 (VGQNGDSIHLPRRTNQVFTGSSSGGAGDDNGYLLPPMG). Residues 29–44 (SSSSQPQPISSPFHQP) are compositionally biased toward low complexity. The PUM-HD domain occupies 178–518 (YTNRFGYEGY…GNKVLEKLNI (341 aa)). Residues 206–235 (SAFAKDKEMSERLGMSIFQGTKETVDAIYN) form a Pumilio 1; degenerate repeat. Pumilio repeat units lie at residues 236-271 (GLIGDICELMVDPYGSDVVQLLMRRCSSEQIVQLVD), 275-313 (QQMFQFVNICIDSLGTNAIQVLLTCINERAKDQIPRIVD), 314-348 (VVRTVALQLSKSNHAIFVILACFRLFPLHCRLLLE), 349-387 (LIVQNCHQIAIDQHGCCLLQLCFNKDRVPNLEIRQRLIM), 388-423 (EAIANALRLCLNCYGNYVVQYIVELNNRYLIDALVR), 424-459 (QLIGNYAHLARNKYGSHAVQKLLKLRWIDSRVIVID), and 460-494 (LLREIDTLLLDPFGNYVIQTAWFVSKDDVRRMLRY).

The protein resides in the cytoplasm. It localises to the nucleus. Sequence-specific RNA-binding protein that regulates translation and mRNA stability by binding the 3'-UTR of target mRNAs. In Arabidopsis thaliana (Mouse-ear cress), this protein is Pumilio homolog 14 (APUM14).